The sequence spans 188 residues: Protease-associated domain-containing protein 1 (188 aa).

Residues methionine 1 to alanine 21 form the signal peptide. Residues isoleucine 83–tryptophan 163 form the PA domain. Asparagine 171 carries N-linked (GlcNAc...) asparagine glycosylation.

Post-translationally, N-glycosylated; required for efficient secretion. Highly expressed in skeletal muscle, heart and liver. Expressed at intermediate level in kidney.

The protein resides in the secreted. Functionally, plays a role in the modulation of physical activity and adiposity. This Homo sapiens (Human) protein is Protease-associated domain-containing protein 1.